Here is a 340-residue protein sequence, read N- to C-terminus: Lysophospholipase L2 (340 aa).

The protein localises to the cell inner membrane. The catalysed reaction is a 1-acyl-sn-glycero-3-phosphocholine + H2O = sn-glycerol 3-phosphocholine + a fatty acid + H(+). The polypeptide is Lysophospholipase L2 (pldB) (Escherichia coli O6:H1 (strain CFT073 / ATCC 700928 / UPEC)).